The following is a 443-amino-acid chain: ATP-dependent protease ATPase subunit HslU (443 aa).

ATP-binding positions include isoleucine 18, 60-65 (GVGKTE), aspartate 256, glutamate 321, and arginine 393.

Belongs to the ClpX chaperone family. HslU subfamily. As to quaternary structure, a double ring-shaped homohexamer of HslV is capped on each side by a ring-shaped HslU homohexamer. The assembly of the HslU/HslV complex is dependent on binding of ATP.

The protein resides in the cytoplasm. In terms of biological role, ATPase subunit of a proteasome-like degradation complex; this subunit has chaperone activity. The binding of ATP and its subsequent hydrolysis by HslU are essential for unfolding of protein substrates subsequently hydrolyzed by HslV. HslU recognizes the N-terminal part of its protein substrates and unfolds these before they are guided to HslV for hydrolysis. The protein is ATP-dependent protease ATPase subunit HslU of Escherichia fergusonii (strain ATCC 35469 / DSM 13698 / CCUG 18766 / IAM 14443 / JCM 21226 / LMG 7866 / NBRC 102419 / NCTC 12128 / CDC 0568-73).